The following is a 321-amino-acid chain: Ribosomal RNA small subunit methyltransferase H (321 aa).

S-adenosyl-L-methionine-binding positions include 34–36, aspartate 54, phenylalanine 80, aspartate 102, and glutamine 109; that span reads GGH.

Belongs to the methyltransferase superfamily. RsmH family.

It localises to the cytoplasm. The catalysed reaction is cytidine(1402) in 16S rRNA + S-adenosyl-L-methionine = N(4)-methylcytidine(1402) in 16S rRNA + S-adenosyl-L-homocysteine + H(+). Its function is as follows. Specifically methylates the N4 position of cytidine in position 1402 (C1402) of 16S rRNA. This is Ribosomal RNA small subunit methyltransferase H from Blochmanniella floridana.